A 182-amino-acid chain; its full sequence is Core-binding factor subunit beta (182 aa).

At A173 the chain carries Phosphoserine.

This sequence belongs to the CBF-beta family. As to quaternary structure, heterodimer with RUNX1, RUNX2 and RUNX3. Interacts with COPRS. Found in a complex with PRMT5 and RUNX1. (Microbial infection) Interacts with HIV-1 Vif; forming an active cullin-5-RING E3 ubiquitin-protein ligase complex (ECS complex).

It is found in the nucleus. In terms of biological role, forms the heterodimeric complex core-binding factor (CBF) with RUNX family proteins (RUNX1, RUNX2, and RUNX3). RUNX members modulate the transcription of their target genes through recognizing the core consensus binding sequence 5'-TGTGGT-3', or very rarely, 5'-TGCGGT-3', within their regulatory regions via their runt domain, while CBFB is a non-DNA-binding regulatory subunit that allosterically enhances the sequence-specific DNA-binding capacity of RUNX. The heterodimers bind to the core site of a number of enhancers and promoters, including murine leukemia virus, polyomavirus enhancer, T-cell receptor enhancers, LCK, IL3 and GM-CSF promoters. CBF complexes repress ZBTB7B transcription factor during cytotoxic (CD8+) T cell development. They bind to RUNX-binding sequence within the ZBTB7B locus acting as transcriptional silencer and allowing for cytotoxic T cell differentiation. Functionally, (Microbial infection) Following infection, hijacked by the HIV-1 Vif protein, leading to the formation a cullin-5-RING E3 ubiquitin-protein ligase complex (ECS complex) that catalyzes ubiquitination and degradation of APOBEC3F and APOBEC3G. The complex can also ubiquitinate APOBEC3H to some extent. Association with HIV-1 Vif protein also inhibits the transcription coactivator activity of CBFB/CBF-beta. The chain is Core-binding factor subunit beta (CBFB) from Homo sapiens (Human).